Reading from the N-terminus, the 172-residue chain is uncharacterized protein (172 aa).

A signal peptide spans 1-29 (MKKKQVMLALTAAAGLGLTALHSAPAAKA). SH3b domains follow at residues 42-105 (SDTY…MKTA) and 112-172 (KQTA…LQMR).

This is an uncharacterized protein from Bacillus subtilis (strain 168).